Consider the following 806-residue polypeptide: Mitogen-activated protein kinase 7 (806 aa).

The disordered stretch occupies residues 1–23; the sequence is MAEPLKEEDGEDGSGEPPGRVKA. Position 2 is an N-acetylalanine (Ala-2). Positions 2-77 are required for cytoplasmic targeting; that stretch reads AEPLKEEDGE…VVSSARRRLT (76 aa). One can recognise a Protein kinase domain in the interval 55-347; it reads YEIIETIGNG…AAAALRHPFL (293 aa). ATP is bound by residues 61–69 and Lys-84; that span reads IGNGAYGVV. Residues 78-139 form a required for binding to MAP2K5 region; sequence GQQVAIKKIP…FRSVYVVLDL (62 aa). The necessary for oligomerization stretch occupies residues 140–406; that stretch reads MESDLHQIIH…QQIRFQPSLQ (267 aa). The active-site Proton acceptor is the Asp-182. The TXY signature appears at 219–221; the sequence is TEY. The interval 407–806 is may not be required for kinase activity; required to stimulate MEF2C activity; sequence PVASEPVCPD…LSDLPDLQEP (400 aa). Disordered regions lie at residues 424-475 and 488-727; these read APSG…SDNT and RSRL…PKGS. The span at 433-443 shows a compositional bias: pro residues; the sequence is SPPPALPPCSG. Basic and acidic residues-rich tracts occupy residues 502–519, 527–544, and 563–573; these read PEPR…EREE, RAKE…KERG, and DNDRSLLERWT. Positions 505 to 539 match the Nuclear localization signal motif; the sequence is RKPVTAQERQREREEKRRRRQERAKEREKRRQERE. 2 stretches are compositionally biased toward pro residues: residues 578–592 and 627–643; these read PPVP…PTPK and VCPP…PVPA. Positions 647–660 are enriched in polar residues; it reads TAPSTSLLASQSLV. The segment covering 678 to 689 has biased composition (pro residues); that stretch reads PSGPPPPDPGLT. Positions 693–710 are enriched in polar residues; sequence STSESPDVNLVTQQLSKS. Ser-710 carries the post-translational modification Phosphoserine. Thr-723 is subject to Phosphothreonine.

Belongs to the protein kinase superfamily. CMGC Ser/Thr protein kinase family. MAP kinase subfamily. As to quaternary structure, interacts with MAP2K5. Forms oligomers. Interacts with MEF2A, MEF2C and MEF2D; the interaction phosphorylates the MEF2s and enhances transcriptional activity of MEF2A, MEF2C but not MEF2D. Interacts with SGK1. Interacts with PML. Interacts (via N-terminal half) with HSP90AB1-CDC37 chaperone complex in resting cells; the interaction is MAP2K5-independent and prevents MAPK7 from ubiquitination and proteasomal degradation. Interacts with STUB1/CHIP; the interaction is enhanced in the presence of IGF1 or MAP2K5 and promotes STUB1/CHIP E3 ligase activity. Mg(2+) serves as cofactor. In terms of processing, dually phosphorylated on Thr-219 and Tyr-221, which activates the enzyme.

Its subcellular location is the cytoplasm. It localises to the nucleus. The protein localises to the PML body. The enzyme catalyses L-seryl-[protein] + ATP = O-phospho-L-seryl-[protein] + ADP + H(+). It catalyses the reaction L-threonyl-[protein] + ATP = O-phospho-L-threonyl-[protein] + ADP + H(+). With respect to regulation, activated by tyrosine and threonine phosphorylation. Activated in response to hyperosmolarity, hydrogen peroxide, and epidermal growth factor (EGF). In terms of biological role, plays a role in various cellular processes such as proliferation, differentiation and cell survival. The upstream activator of MAPK7 is the MAPK kinase MAP2K5. Upon activation, it translocates to the nucleus and phosphorylates various downstream targets including MEF2C. EGF activates MAPK7 through a Ras-independent and MAP2K5-dependent pathway. As part of the MAPK/ERK signaling pathway, acts as a negative regulator of apoptosis in cardiomyocytes via interaction with STUB1/CHIP and promotion of STUB1-mediated ubiquitination and degradation of ICER-type isoforms of CREM. May have a role in muscle cell differentiation. May be important for endothelial function and maintenance of blood vessel integrity. MAP2K5 and MAPK7 interact specifically with one another and not with MEK1/ERK1 or MEK2/ERK2 pathways. Phosphorylates SGK1 at Ser-78 and this is required for growth factor-induced cell cycle progression. Involved in the regulation of p53/TP53 by disrupting the PML-MDM2 interaction. This Rattus norvegicus (Rat) protein is Mitogen-activated protein kinase 7 (Mapk7).